Consider the following 406-residue polypeptide: L-methionine gamma-lyase (406 aa).

Pyridoxal 5'-phosphate is bound by residues 76-78 (YQR) and 106-107 (GM). An L-homocysteine-binding site is contributed by Y132. Residue 219–221 (SAT) participates in pyridoxal 5'-phosphate binding. Position 222 is an N6-(pyridoxal phosphate)lysine (K222). R380 lines the L-homocysteine pocket. Position 380 (R380) interacts with L-methionine.

This sequence belongs to the trans-sulfuration enzymes family. L-methionine gamma-lyase subfamily. In terms of assembly, homotetramer. Requires pyridoxal 5'-phosphate as cofactor.

The enzyme catalyses L-methionine + H2O = methanethiol + 2-oxobutanoate + NH4(+). It carries out the reaction L-homocysteine + H2O = 2-oxobutanoate + hydrogen sulfide + NH4(+) + H(+). Its activity is regulated as follows. Is inhibited in vitro by carbonyl reagents, completely inactivated by DL-propargylglycine, and unaffected by metal-chelating agents. Its function is as follows. Catalyzes the alpha,gamma-elimination of L-methionine to produce methanethiol, 2-oxobutanoate and ammonia. May be responsible for the production of methanethiol associated with desirable Cheddar-type sulfur notes during cheese ripening. Is also able to catalyze the alpha,gamma-elimination of L-homocysteine and DL-selenomethionine, but has no activity toward L-cysteine, L-cystathionine, S-adenosyl-L-homocysteine and D-methionine. The polypeptide is L-methionine gamma-lyase (Brevibacterium aurantiacum).